The following is a 520-amino-acid chain: Probable cytochrome P450 6v1 (520 aa).

Cysteine 465 serves as a coordination point for heme.

Belongs to the cytochrome P450 family. Requires heme as cofactor.

The protein localises to the endoplasmic reticulum membrane. It is found in the microsome membrane. May be involved in the metabolism of insect hormones and in the breakdown of synthetic insecticides. In Drosophila melanogaster (Fruit fly), this protein is Probable cytochrome P450 6v1 (Cyp6v1).